The following is a 630-amino-acid chain: Ribonucleoside-diphosphate reductase large subunit (630 aa).

Substrate contacts are provided by residues Ser67, 82–83 (AC), Gly111, 317–321 (NLCSE), and 459–463 (PNATS). Cys83 and Cys334 are disulfide-bonded. Catalysis depends on Asn317, which acts as the Proton acceptor. Cys319 (cysteine radical intermediate) is an active-site residue. Residue Glu321 is the Proton acceptor of the active site.

Belongs to the ribonucleoside diphosphate reductase large chain family. As to quaternary structure, heterotetramer composed of a homodimer of the large subunit (R1) and a homodimer of the small subunit (R2). Larger multisubunit protein complex are also active, composed of (R1)n(R2)n.

The enzyme catalyses a 2'-deoxyribonucleoside 5'-diphosphate + [thioredoxin]-disulfide + H2O = a ribonucleoside 5'-diphosphate + [thioredoxin]-dithiol. Its activity is regulated as follows. Under complex allosteric control mediated by deoxynucleoside triphosphates and ATP binding. The type of nucleotide bound at the specificity site determines substrate preference. It seems probable that ATP makes the enzyme reduce CDP and UDP, dGTP favors ADP reduction and dTTP favors GDP reduction. Functionally, ribonucleoside-diphosphate reductase holoenzyme provides the precursors necessary for viral DNA synthesis. Allows virus growth in non-dividing cells. Catalyzes the biosynthesis of deoxyribonucleotides from the corresponding ribonucleotides. This is Ribonucleoside-diphosphate reductase large subunit from Aedes vexans (Inland floodwater mosquito).